Consider the following 214-residue polypeptide: Octanoyltransferase (214 aa).

The region spanning 32–207 is the BPL/LPL catalytic domain; that stretch reads EDTLDEIWLV…NLLALLNHPP (176 aa). Residues 71–78, 138–140, and 151–153 contribute to the substrate site; these read RGGQVTYH, SLG, and GLA. The active-site Acyl-thioester intermediate is the cysteine 169.

The protein belongs to the LipB family.

It localises to the cytoplasm. It carries out the reaction octanoyl-[ACP] + L-lysyl-[protein] = N(6)-octanoyl-L-lysyl-[protein] + holo-[ACP] + H(+). It functions in the pathway protein modification; protein lipoylation via endogenous pathway; protein N(6)-(lipoyl)lysine from octanoyl-[acyl-carrier-protein]: step 1/2. Its function is as follows. Catalyzes the transfer of endogenously produced octanoic acid from octanoyl-acyl-carrier-protein onto the lipoyl domains of lipoate-dependent enzymes. Lipoyl-ACP can also act as a substrate although octanoyl-ACP is likely to be the physiological substrate. In Klebsiella pneumoniae (strain 342), this protein is Octanoyltransferase.